A 413-amino-acid chain; its full sequence is Multidrug resistance protein MdtA (413 aa).

The N-terminal stretch at 1 to 20 (MKGSNTFRWAIAIGVVVAAA) is a signal peptide. Disordered stretches follow at residues 31–57 (SPTAAPGVAAQAPHTAAAGRRGMRDGP) and 391–413 (EPQTTMADEKSPSRHEGQKGARA). Residues 397–413 (ADEKSPSRHEGQKGARA) are compositionally biased toward basic and acidic residues.

The protein belongs to the membrane fusion protein (MFP) (TC 8.A.1) family. As to quaternary structure, part of a tripartite efflux system composed of MdtA, MdtB and MdtC.

It is found in the cell inner membrane. This Salmonella paratyphi C (strain RKS4594) protein is Multidrug resistance protein MdtA.